The chain runs to 197 residues: ATP-dependent Clp protease proteolytic subunit (197 aa).

The active-site Nucleophile is the Ser-101. Residue His-126 is part of the active site.

Belongs to the peptidase S14 family. As to quaternary structure, component of the chloroplastic Clp protease core complex.

The protein resides in the plastid. The protein localises to the chloroplast stroma. It carries out the reaction Hydrolysis of proteins to small peptides in the presence of ATP and magnesium. alpha-casein is the usual test substrate. In the absence of ATP, only oligopeptides shorter than five residues are hydrolyzed (such as succinyl-Leu-Tyr-|-NHMec, and Leu-Tyr-Leu-|-Tyr-Trp, in which cleavage of the -Tyr-|-Leu- and -Tyr-|-Trp bonds also occurs).. In terms of biological role, cleaves peptides in various proteins in a process that requires ATP hydrolysis. Has a chymotrypsin-like activity. Plays a major role in the degradation of misfolded proteins. The polypeptide is ATP-dependent Clp protease proteolytic subunit (Daucus carota (Wild carrot)).